The following is a 202-amino-acid chain: Pyridoxal 5'-phosphate synthase subunit PdxT (202 aa).

52–54 provides a ligand contact to L-glutamine; it reads GES. The active-site Nucleophile is C84. L-glutamine-binding positions include R120 and 148-149; that span reads IR. Residues H185 and E187 each act as charge relay system in the active site.

The protein belongs to the glutaminase PdxT/SNO family. In the presence of PdxS, forms a dodecamer of heterodimers. Only shows activity in the heterodimer.

It carries out the reaction aldehydo-D-ribose 5-phosphate + D-glyceraldehyde 3-phosphate + L-glutamine = pyridoxal 5'-phosphate + L-glutamate + phosphate + 3 H2O + H(+). The catalysed reaction is L-glutamine + H2O = L-glutamate + NH4(+). Its pathway is cofactor biosynthesis; pyridoxal 5'-phosphate biosynthesis. Catalyzes the hydrolysis of glutamine to glutamate and ammonia as part of the biosynthesis of pyridoxal 5'-phosphate. The resulting ammonia molecule is channeled to the active site of PdxS. This chain is Pyridoxal 5'-phosphate synthase subunit PdxT, found in Methanopyrus kandleri (strain AV19 / DSM 6324 / JCM 9639 / NBRC 100938).